Consider the following 430-residue polypeptide: tRNA(Ile)-lysidine synthase (430 aa).

Residue 21-26 participates in ATP binding; that stretch reads SGGLDS.

Belongs to the tRNA(Ile)-lysidine synthase family.

It localises to the cytoplasm. It carries out the reaction cytidine(34) in tRNA(Ile2) + L-lysine + ATP = lysidine(34) in tRNA(Ile2) + AMP + diphosphate + H(+). In terms of biological role, ligates lysine onto the cytidine present at position 34 of the AUA codon-specific tRNA(Ile) that contains the anticodon CAU, in an ATP-dependent manner. Cytidine is converted to lysidine, thus changing the amino acid specificity of the tRNA from methionine to isoleucine. This Salmonella choleraesuis (strain SC-B67) protein is tRNA(Ile)-lysidine synthase.